Here is a 424-residue protein sequence, read N- to C-terminus: UPF0761 membrane protein Smlt0865 (424 aa).

6 helical membrane-spanning segments follow: residues 48–68 (VFAL…FPVF), 101–121 (SAGQ…LITL), 144–164 (FLVY…SLAV), 181–201 (WLAE…CITL), 216–236 (AVPG…GIGA), and 251–271 (VAFV…VLLG).

The protein belongs to the UPF0761 family.

The protein localises to the cell inner membrane. This Stenotrophomonas maltophilia (strain K279a) protein is UPF0761 membrane protein Smlt0865.